We begin with the raw amino-acid sequence, 246 residues long: UDP-2,3-diacylglucosamine hydrolase (246 aa).

Mn(2+) is bound by residues aspartate 8, histidine 10, aspartate 41, asparagine 79, and histidine 114. Asparagine 79–arginine 80 serves as a coordination point for substrate. The substrate site is built by aspartate 122, lysine 164, lysine 167, and histidine 195. Positions 195 and 197 each coordinate Mn(2+).

The protein belongs to the LpxH family. Mn(2+) serves as cofactor.

Its subcellular location is the cell inner membrane. It carries out the reaction UDP-2-N,3-O-bis[(3R)-3-hydroxytetradecanoyl]-alpha-D-glucosamine + H2O = 2-N,3-O-bis[(3R)-3-hydroxytetradecanoyl]-alpha-D-glucosaminyl 1-phosphate + UMP + 2 H(+). The protein operates within glycolipid biosynthesis; lipid IV(A) biosynthesis; lipid IV(A) from (3R)-3-hydroxytetradecanoyl-[acyl-carrier-protein] and UDP-N-acetyl-alpha-D-glucosamine: step 4/6. Functionally, hydrolyzes the pyrophosphate bond of UDP-2,3-diacylglucosamine to yield 2,3-diacylglucosamine 1-phosphate (lipid X) and UMP by catalyzing the attack of water at the alpha-P atom. Involved in the biosynthesis of lipid A, a phosphorylated glycolipid that anchors the lipopolysaccharide to the outer membrane of the cell. The protein is UDP-2,3-diacylglucosamine hydrolase of Vibrio cholerae serotype O1 (strain ATCC 39541 / Classical Ogawa 395 / O395).